Reading from the N-terminus, the 101-residue chain is Vacuolar ATPase assembly integral membrane protein VMA21 (101 aa).

Topologically, residues 1–25 are cytoplasmic; sequence MERLDKAALNALQPSDFRNESSLAS. The helical transmembrane segment at 26–46 threads the bilayer; the sequence is TLKTLLFFTALMITVPIGLYF. The Lumenal segment spans residues 47–65; it reads TTKSYVFEGAFGMSNRDSY. A helical transmembrane segment spans residues 66–86; that stretch reads FYAAIVAVVAVHVVLALFVYV. Residues 87–101 are Cytoplasmic-facing; that stretch reads AWNEGSRQWREGKQD.

It belongs to the VMA21 family. Associates with the V0 complex of the vacuolar ATPase (V-ATPase). Interacts with ATP6AP2.

It localises to the endoplasmic reticulum membrane. It is found in the endoplasmic reticulum-Golgi intermediate compartment membrane. The protein localises to the cytoplasmic vesicle. Its subcellular location is the COPII-coated vesicle membrane. Required for the assembly of the V0 complex of the vacuolar ATPase (V-ATPase) in the endoplasmic reticulum. The sequence is that of Vacuolar ATPase assembly integral membrane protein VMA21 from Bos taurus (Bovine).